A 790-amino-acid chain; its full sequence is Ice-structuring glycoprotein (790 aa).

Residues V1–P5 constitute a propeptide that is removed on maturation.

Post-translationally, O-glycosylated; contains disaccharide galactose-N-acetylgalactosamine attached to threonines in AFGP8 and AFGP7. Synthesized by the liver and secreted into the blood from which they become distributed to almost the entire extracellular space.

The protein resides in the secreted. In terms of biological role, antifreeze proteins lower the blood freezing point. This Notothenia neglecta (Yellowbelly rockcod) protein is Ice-structuring glycoprotein (afgp8).